A 231-amino-acid chain; its full sequence is Uridylate kinase (231 aa).

9-12 (KLSG) contacts ATP. A UMP-binding site is contributed by Gly49. Gly50 and Arg54 together coordinate ATP. UMP-binding positions include Asp69 and 130 to 137 (AGMPYFST). Positions 158, 164, and 167 each coordinate ATP.

The protein belongs to the UMP kinase family. As to quaternary structure, homohexamer.

It localises to the cytoplasm. The enzyme catalyses UMP + ATP = UDP + ADP. Its pathway is pyrimidine metabolism; CTP biosynthesis via de novo pathway; UDP from UMP (UMPK route): step 1/1. With respect to regulation, inhibited by UTP. Its function is as follows. Catalyzes the reversible phosphorylation of UMP to UDP. The polypeptide is Uridylate kinase (Tropheryma whipplei (strain Twist) (Whipple's bacillus)).